The sequence spans 1106 residues: Translation initiation factor IF-2 (1106 aa).

Composition is skewed to low complexity over residues 57–72 (GKAAGGAKAPAKPDAG) and 81–97 (APSTPSQSAGAPASAPP). Disordered regions lie at residues 57-434 (GKAA…QKVH) and 466-497 (PSKPKNLPGNKGARPVALRRRKKETTRQRQRR). 2 stretches are compositionally biased toward pro residues: residues 113 to 123 (PAKPAPSAPPS) and 138 to 148 (PAKPAPSAPPS). The span at 172 to 199 (AKPVAKPASAPAPARPAQPLRPQASNRP) shows a compositional bias: low complexity. Composition is skewed to pro residues over residues 200–214 (PQQPSNRPPARPAAK) and 223–235 (TAPPPRPARPGAP). 3 stretches are compositionally biased toward low complexity: residues 251–292 (PNQQ…QQRR), 319–329 (PQGRQGGAPSR), and 395–405 (YRPAAAPGMAG). Residues 408–422 (RRPDWDDSARLDALR) are compositionally biased toward basic and acidic residues. The segment covering 482–497 (ALRRRKKETTRQRQRR) has biased composition (basic residues). Residues 598–771 (RRPPVVTVMG…LLVTEVEDLK (174 aa)) form the tr-type G domain. The interval 607 to 614 (GHVDHGKT) is G1. 607-614 (GHVDHGKT) is a binding site for GTP. Residues 632 to 636 (GITQH) form a G2 region. The segment at 657 to 660 (DTPG) is G3. Residues 657-661 (DTPGH) and 711-714 (NKVD) contribute to the GTP site. The tract at residues 711 to 714 (NKVD) is G4. The G5 stretch occupies residues 747 to 749 (SAL).

It belongs to the TRAFAC class translation factor GTPase superfamily. Classic translation factor GTPase family. IF-2 subfamily.

It localises to the cytoplasm. Functionally, one of the essential components for the initiation of protein synthesis. Protects formylmethionyl-tRNA from spontaneous hydrolysis and promotes its binding to the 30S ribosomal subunits. Also involved in the hydrolysis of GTP during the formation of the 70S ribosomal complex. The chain is Translation initiation factor IF-2 from Synechococcus sp. (strain RCC307).